The sequence spans 102 residues: Small ribosomal subunit protein uS10 (102 aa).

The protein belongs to the universal ribosomal protein uS10 family. Part of the 30S ribosomal subunit.

In terms of biological role, involved in the binding of tRNA to the ribosomes. The sequence is that of Small ribosomal subunit protein uS10 from Halalkalibacterium halodurans (strain ATCC BAA-125 / DSM 18197 / FERM 7344 / JCM 9153 / C-125) (Bacillus halodurans).